Consider the following 393-residue polypeptide: Mitogen-activated protein kinase homolog NTF4 (393 aa).

Positions 1–32 (MDGPAHQTDTVMSDAAGQQPAPPSQPVAGIDN) are disordered. Residues 60–345 (KPPIMPIGKG…VEDALAHPYL (286 aa)) enclose the Protein kinase domain. Residues 66–74 (IGKGAYGIV) and Lys89 contribute to the ATP site. The active-site Proton acceptor is Asp186. Thr218 is modified (phosphothreonine). The TXY motif lies at 218 to 220 (TEY). Tyr220 bears the Phosphotyrosine mark.

It belongs to the protein kinase superfamily. CMGC Ser/Thr protein kinase family. MAP kinase subfamily. It depends on Mg(2+) as a cofactor. Dually phosphorylated on Thr-218 and Tyr-220, which activates the enzyme. Very low autophosphorylation, although dramatically increased when Mn(2+) is added to the reaction instead of Mg(2+).

The catalysed reaction is L-seryl-[protein] + ATP = O-phospho-L-seryl-[protein] + ADP + H(+). It carries out the reaction L-threonyl-[protein] + ATP = O-phospho-L-threonyl-[protein] + ADP + H(+). Its activity is regulated as follows. Activated by tyrosine and threonine phosphorylation. The sequence is that of Mitogen-activated protein kinase homolog NTF4 (NTF4) from Nicotiana tabacum (Common tobacco).